A 122-amino-acid polypeptide reads, in one-letter code: Aspartate 1-decarboxylase (122 aa).

S25 functions as the Schiff-base intermediate with substrate; via pyruvic acid in the catalytic mechanism. Residue S25 is modified to Pyruvic acid (Ser). T57 provides a ligand contact to substrate. The Proton donor role is filled by Y58. Position 73 to 75 (73 to 75 (GAA)) interacts with substrate.

This sequence belongs to the PanD family. In terms of assembly, heterooctamer of four alpha and four beta subunits. It depends on pyruvate as a cofactor. Post-translationally, is synthesized initially as an inactive proenzyme, which is activated by self-cleavage at a specific serine bond to produce a beta-subunit with a hydroxyl group at its C-terminus and an alpha-subunit with a pyruvoyl group at its N-terminus.

Its subcellular location is the cytoplasm. The enzyme catalyses L-aspartate + H(+) = beta-alanine + CO2. The protein operates within cofactor biosynthesis; (R)-pantothenate biosynthesis; beta-alanine from L-aspartate: step 1/1. Functionally, catalyzes the pyruvoyl-dependent decarboxylation of aspartate to produce beta-alanine. The sequence is that of Aspartate 1-decarboxylase from Bordetella avium (strain 197N).